Consider the following 688-residue polypeptide: Phosphatidylinositol 4-phosphate 5-kinase type-1 gamma (688 aa).

Positions 48-71 (GQPGPGHGKKLGHRGVDASGETTY) are disordered. The PIPK domain occupies 75–443 (TSSTLKGAIQ…RFFKFMSSTV (369 aa)). An N6-acetyllysine mark is found at Lys-265 and Lys-268. An Asymmetric dimethylarginine; alternate modification is found at Arg-459. Arg-459 is subject to Omega-N-methylarginine; alternate. Residues 525–534 (TTLSSTSLSI) show a composition bias toward low complexity. 2 disordered regions span residues 525–565 (TTLS…QEEL) and 592–629 (GAGVEVPPSGASAAATVEVDAASQASEPASQASDEEDA). Ser-554 carries the post-translational modification Phosphoserine. Low complexity predominate over residues 602-623 (ASAAATVEVDAASQASEPASQA). Tyr-635 is modified (phosphotyrosine; by EGFR). Phosphotyrosine; by CSK is present on Tyr-671. The residue at position 672 (Ser-672) is a Phosphoserine; by CDK5, MAPK1 and CDK1. Phosphoserine is present on residues Ser-682 and Ser-686. Thr-688 carries the post-translational modification Phosphothreonine.

In terms of assembly, interacts with TLN1. Interacts with TLN2; interaction stimulates 1-phosphatidylinositol-4-phosphate 5-kinase activity. May compete with beta-integrins for the same binding site on TLN1 and TLN2. Interacts with ARF6; interaction stimulates 1-phosphatidylinositol-4-phosphate 5-kinase activity. Interacts with AP2B1. Interacts with AP2M1; phosphorylation of PIP5K1C by CSK disrupts the interaction; clathrin competes with PIP5K1C. Interacts with CDH1. Interacts with CSK. Interacts with PLCG1; interaction is abolished upon EGF stimulation. Interacts with LAPTM4B; promotes SNX5 association with LAPTM4B; kinase activity of PIP5K1C is required; interaction is regulated by phosphatidylinositol 4,5-bisphosphate generated by PIP5K1C. Post-translationally, phosphorylation on Ser-672 negatively regulates binding to TLN2 and is strongly stimulated in mitosis. Phosphorylation on Tyr-671 is necessary for targeting to focal adhesions. Phosphorylation on Ser-672 and Tyr-671 are mutually exclusive. Phosphorylated by SYK and CSK. Tyrosine phosphorylation is enhanced by PTK2 signaling. Phosphorylated at Tyr-635 upon EGF stimulation. Some studies suggest that phosphorylation on Tyr-671 enhances binding to tailins (TLN1 and TLN2); others that phosphorylation at Tyr-671 does not directly enhance binding to tailins (TLN1 and TLN2) but may act indirectly by inhibiting phosphorylation at Ser-672. In terms of processing, acetylation at Lys-265 and Lys-268 seems to decrease lipid kinase activity. Deacetylation of these sites by SIRT1 positively regulates the exocytosis of TSH-containing granules from pituitary cells.

It localises to the cell membrane. Its subcellular location is the endomembrane system. The protein resides in the cytoplasm. The protein localises to the cell junction. It is found in the focal adhesion. It localises to the adherens junction. Its subcellular location is the cell projection. The protein resides in the ruffle membrane. The protein localises to the phagocytic cup. It is found in the uropodium. It catalyses the reaction a 1,2-diacyl-sn-glycero-3-phospho-(1D-myo-inositol 4-phosphate) + ATP = a 1,2-diacyl-sn-glycero-3-phospho-(1D-myo-inositol-4,5-bisphosphate) + ADP + H(+). It carries out the reaction 1-octadecanoyl-2-(5Z,8Z,11Z,14Z)-eicosatetraenoyl-sn-glycero-3-phospho-1D-myo-inositol 4-phosphate + ATP = 1-octadecanoyl-2-(5Z,8Z,11Z,14Z)-eicosatetraenoyl-sn-glycero-3-phospho-1D-myo-inositol 4,5-bisphosphate + ADP + H(+). The enzyme catalyses 1-octadecanoyl-2-(9Z)-octadecenoyl-sn-glycero-3-phospho-1D-myo-inositol 4-phosphate + ATP = 1-octadecanoyl-2-(9Z)-octadecenoyl-sn-glycero-3-phospho-1D-myo-inositol 4,5-bisphosphate + ADP + H(+). The catalysed reaction is 1-octadecanoyl-2-(9Z)-octadecenoyl-sn-glycero-3-phospho-1D-myo-inositol + ATP = 1-octadecanoyl-2-(9Z)-octadecenoyl-sn-glycero-3-phospho-1D-myo-inositol 5-phosphate + ADP + H(+). It catalyses the reaction 1-octadecanoyl-2-(9Z,12Z)-octadecadienoyl-sn-glycero-3-phospho-1D-myo-inositol + ATP = 1-octadecanoyl-2-(9Z,12Z)-octadecadienoyl-sn-glycero-3-phospho-1D-myo-inositol 5-phosphate + ADP + H(+). It carries out the reaction 1-octadecanoyl-2-(5Z,8Z,11Z,14Z-eicosatetraenoyl)-sn-glycero-3-phospho-(1D-myo-inositol) + ATP = 1-octadecanoyl-2-(5Z,8Z,11Z,14Z)-eicosatetraenoyl-sn-glycero-3-phospho-1D-myo-inositol 5-phosphate + ADP + H(+). The enzyme catalyses 1,2-di-(9Z,12Z)-octadecadienoyl-sn-glycero-3-phospho-1D-myo-inositol + ATP = 1,2-di(9Z,12Z)-octadecadienoyl-sn-glycero-3-phospho-1D-myo-inositol 5-phosphate + ADP + H(+). In terms of biological role, catalyzes the phosphorylation of phosphatidylinositol 4-phosphate (PtdIns(4)P/PI4P) to form phosphatidylinositol 4,5-bisphosphate (PtdIns(4,5)P2/PIP2), a lipid second messenger that regulates several cellular processes such as signal transduction, vesicle trafficking, actin cytoskeleton dynamics, cell adhesion, and cell motility. PtdIns(4,5)P2 can directly act as a second messenger or can be utilized as a precursor to generate other second messengers: inositol 1,4,5-trisphosphate (IP3), diacylglycerol (DAG) or phosphatidylinositol-3,4,5-trisphosphate (PtdIns(3,4,5)P3/PIP3). PIP5K1A-mediated phosphorylation of PtdIns(4)P is the predominant pathway for PtdIns(4,5)P2 synthesis. Together with PIP5K1A, is required for phagocytosis, both enzymes regulating different types of actin remodeling at sequential steps. Promotes particle attachment by generating the pool of PtdIns(4,5)P2 that induces controlled actin depolymerization to facilitate Fc-gamma-R clustering. Mediates RAC1-dependent reorganization of actin filaments. Required for synaptic vesicle transport. Controls the plasma membrane pool of PtdIns(4,5)P2 implicated in synaptic vesicle endocytosis and exocytosis. Plays a role in endocytosis mediated by clathrin and AP-2 (adaptor protein complex 2). Required for clathrin-coated pits assembly at the synapse. Participates in cell junction assembly. Modulates adherens junctions formation by facilitating CDH1/cadherin trafficking. Required for focal adhesion dynamics. Modulates the targeting of talins (TLN1 and TLN2) to the plasma membrane and their efficient assembly into focal adhesions. Regulates the interaction between talins (TLN1 and TLN2) and beta-integrins. Required for uropodium formation and retraction of the cell rear during directed migration. Has a role in growth factor-stimulated directional cell migration and adhesion. Required for talin assembly into nascent adhesions forming at the leading edge toward the direction of the growth factor. Negative regulator of T-cell activation and adhesion. Negatively regulates integrin alpha-L/beta-2 (LFA-1) polarization and adhesion induced by T-cell receptor. Together with PIP5K1A has a role during embryogenesis and together with PIP5K1B may have a role immediately after birth. In Rattus norvegicus (Rat), this protein is Phosphatidylinositol 4-phosphate 5-kinase type-1 gamma.